The primary structure comprises 389 residues: Phospho-N-acetylmuramoyl-pentapeptide-transferase (389 aa).

10 helical membrane passes run 25–45 (RAVM…PWVI), 73–93 (TMGG…WGDL), 97–117 (FIWI…VDDY), 135–155 (FWQS…VSEA), 190–210 (ISYP…IVGA), 222–242 (GLVI…AYVM), 258–278 (GAGE…AFLW), 286–306 (VFMG…VAVI), 311–331 (IVLF…MLQV), and 366–386 (QVVV…LSTL).

The protein belongs to the glycosyltransferase 4 family. MraY subfamily. It depends on Mg(2+) as a cofactor.

The protein localises to the cell inner membrane. It carries out the reaction UDP-N-acetyl-alpha-D-muramoyl-L-alanyl-gamma-D-glutamyl-meso-2,6-diaminopimeloyl-D-alanyl-D-alanine + di-trans,octa-cis-undecaprenyl phosphate = di-trans,octa-cis-undecaprenyl diphospho-N-acetyl-alpha-D-muramoyl-L-alanyl-D-glutamyl-meso-2,6-diaminopimeloyl-D-alanyl-D-alanine + UMP. The protein operates within cell wall biogenesis; peptidoglycan biosynthesis. In terms of biological role, catalyzes the initial step of the lipid cycle reactions in the biosynthesis of the cell wall peptidoglycan: transfers peptidoglycan precursor phospho-MurNAc-pentapeptide from UDP-MurNAc-pentapeptide onto the lipid carrier undecaprenyl phosphate, yielding undecaprenyl-pyrophosphoryl-MurNAc-pentapeptide, known as lipid I. The chain is Phospho-N-acetylmuramoyl-pentapeptide-transferase from Burkholderia mallei (strain NCTC 10247).